A 595-amino-acid polypeptide reads, in one-letter code: uncharacterized protein (595 aa).

Helical transmembrane passes span 64–84 (VVFL…LIVF), 86–106 (IFYA…IGVL), 239–259 (FYVI…PVAS), 281–301 (FYLW…GILP), 334–354 (VHFI…LFFI), 368–388 (MFGI…HFII), 504–524 (FIYV…SYIM), 547–567 (YLFQ…GILT), and 571–591 (IIAG…LFKF).

It to M.jannaschii FlaJ.

The protein localises to the cell membrane. This is an uncharacterized protein from Methanocaldococcus jannaschii (strain ATCC 43067 / DSM 2661 / JAL-1 / JCM 10045 / NBRC 100440) (Methanococcus jannaschii).